The sequence spans 454 residues: GTPase Der (454 aa).

EngA-type G domains are found at residues 3-167 (PVIT…GIAE) and 181-354 (MKIA…AAAM). Residues 9–16 (GRPNVGKS), 56–60 (DTGGF), 119–122 (NKTE), 187–194 (GRPNVGKS), 234–238 (DTAGL), and 299–302 (NKWD) contribute to the GTP site. Residues 355–439 (AKLPTPRLTR…PLRIQMNTAK (85 aa)) enclose the KH-like domain.

The protein belongs to the TRAFAC class TrmE-Era-EngA-EngB-Septin-like GTPase superfamily. EngA (Der) GTPase family. As to quaternary structure, associates with the 50S ribosomal subunit.

Its function is as follows. GTPase that plays an essential role in the late steps of ribosome biogenesis. The polypeptide is GTPase Der (Polynucleobacter asymbioticus (strain DSM 18221 / CIP 109841 / QLW-P1DMWA-1) (Polynucleobacter necessarius subsp. asymbioticus)).